Reading from the N-terminus, the 469-residue chain is L-seryl-tRNA(Sec) selenium transferase (469 aa).

Lys298 carries the post-translational modification N6-(pyridoxal phosphate)lysine.

The protein belongs to the SelA family. Requires pyridoxal 5'-phosphate as cofactor.

It localises to the cytoplasm. It carries out the reaction L-seryl-tRNA(Sec) + selenophosphate + H(+) = L-selenocysteinyl-tRNA(Sec) + phosphate. It participates in aminoacyl-tRNA biosynthesis; selenocysteinyl-tRNA(Sec) biosynthesis; selenocysteinyl-tRNA(Sec) from L-seryl-tRNA(Sec) (bacterial route): step 1/1. Its function is as follows. Converts seryl-tRNA(Sec) to selenocysteinyl-tRNA(Sec) required for selenoprotein biosynthesis. This is L-seryl-tRNA(Sec) selenium transferase from Nitratidesulfovibrio vulgaris (strain ATCC 29579 / DSM 644 / CCUG 34227 / NCIMB 8303 / VKM B-1760 / Hildenborough) (Desulfovibrio vulgaris).